The chain runs to 329 residues: Isopentenyl-diphosphate delta-isomerase (329 aa).

4-5 serves as a coordination point for substrate; that stretch reads RK. Residues 59-61, Ser-89, and Asn-116 contribute to the FMN site; that span reads AMT. Residue Gln-146 participates in substrate binding. Residue Glu-147 participates in Mg(2+) binding. Residues Lys-178, Ser-203, Thr-208, 252-254, and 273-274 each bind FMN; these read GVR and SR.

This sequence belongs to the IPP isomerase type 2 family. As to quaternary structure, homooctamer. Dimer of tetramers. The cofactor is FMN. Requires NADPH as cofactor. It depends on Mg(2+) as a cofactor.

The protein localises to the cytoplasm. The catalysed reaction is isopentenyl diphosphate = dimethylallyl diphosphate. Functionally, involved in the biosynthesis of isoprenoids. Catalyzes the 1,3-allylic rearrangement of the homoallylic substrate isopentenyl (IPP) to its allylic isomer, dimethylallyl diphosphate (DMAPP). This chain is Isopentenyl-diphosphate delta-isomerase, found in Streptococcus pyogenes serotype M28 (strain MGAS6180).